The sequence spans 945 residues: Splicing factor, suppressor of white-apricot homolog (945 aa).

Disordered regions lie at residues 1–28 (MYGAGGGRAKAERKGGVKEEAGPGGTGT) and 157–190 (YYDPSEPTEEEEPSKQREKSEAENLEENEEPFIA). 2 stretches are compositionally biased toward basic and acidic residues: residues 9-21 (AKAERKGGVKEEA) and 169-178 (PSKQREKSEA). One copy of the SURP motif 1 repeat lies at 211–253 (IIERTANFVCKQGAQFEIMLKAKQARNSQFDFLRFDHYLNPYY). Residues 269 to 298 (AESKSEEKKKSGPTSDNEEEDDEEDGSYLH) form a disordered region. Ser-283 bears the Phosphoserine mark. Positions 284–294 (DNEEEDDEEDG) are enriched in acidic residues. The residue at position 315 (Lys-315) is an N6-acetyllysine. 2 disordered regions span residues 332–355 (KAQADSSAPAPPTADGTPAQPSQV) and 403–438 (SSSPGVTTTVPPPPGTTPPPPPTTAESSSGVTSTTT). The segment covering 335–352 (ADSSAPAPPTADGTPAQP) has biased composition (low complexity). Residues 412–425 (VPPPPGTTPPPPPT) are compositionally biased toward pro residues. Positions 426-438 (TAESSSGVTSTTT) are enriched in low complexity. An SURP motif 2 repeat occupies 458–498 (VIDKLAEYVARNGLKFETSVRAKNDQRFEFLQPWHQYNAYY). 3 disordered regions span residues 512-566 (GSTQ…TVDG), 589-680 (PLEK…QAER), and 714-921 (GVMP…VQSK). The segment covering 514 to 527 (TQAASTAEEAPTET) has biased composition (low complexity). A compositionally biased stretch (acidic residues) spans 528 to 540 (AVEESSEAGEDGA). Residues 589–598 (PLEKNRVKLD) are compositionally biased toward basic and acidic residues. 2 positions are modified to phosphoserine: Ser-601 and Ser-621. Residues 615-630 (SSVANPSPAAAPPSAV) are compositionally biased toward low complexity. The stretch at 632-686 (EEKKPQLTQEELEAKQAKQKLEDRLAAAAREKLAQASKESKEKQLQAERKRKAAL) forms a coiled coil. Thr-639 is subject to Phosphothreonine. 2 stretches are compositionally biased toward basic and acidic residues: residues 643 to 679 (LEAKQAKQKLEDRLAAAAREKLAQASKESKEKQLQAE) and 733 to 752 (KPPERPSSRCRDPPREEERE). Basic residues-rich tracts occupy residues 753–787 (KKKKKHKKRSRTRSRSPKYHSSSKPRSRSHSKAKH) and 795–810 (TVRRSRSRSRSPRRRA). A compositionally biased stretch (basic and acidic residues) spans 811–821 (HSPERRREDRS). A phosphoserine mark is found at Ser-829 and Ser-831. Positions 835–861 (SRKRTRSRSPHEKKKKRRSRSRTKAKA) are enriched in basic residues. A compositionally biased stretch (low complexity) spans 871–894 (QAAQRPSAHSAHSASISPVESRGS). Positions 895–908 (SQERSRGVSQEKDG) are enriched in basic and acidic residues. Phosphoserine occurs at positions 899 and 903. Residues 909 to 920 (QISSAIVSSVQS) are compositionally biased toward low complexity.

It localises to the nucleus. In terms of biological role, plays a role as an alternative splicing regulator. Regulate its own expression at the level of RNA processing. Also regulates the splicing of fibronectin and CD45 genes. May act, at least in part, by interaction with other R/S-containing splicing factors. Represses the splicing of MAPT/Tau exon 10. This is Splicing factor, suppressor of white-apricot homolog (Sfswap) from Rattus norvegicus (Rat).